Consider the following 363-residue polypeptide: Adenosine deaminase (363 aa).

Zn(2+) is bound by residues His-42 and His-44. A purine D-ribonucleoside contacts are provided by residues His-44–Asp-46, Asp-172, and Gly-201. Positions Ile-170–Ala-184 are gating helix loop; regulates binding affinity for substrates and thus substrate selectivity. His-226 provides a ligand contact to Zn(2+). 3 residues coordinate a purine D-ribonucleoside: Glu-229, His-253, and Asp-310. Asp-310 provides a ligand contact to Zn(2+).

Belongs to the metallo-dependent hydrolases superfamily. Adenosine and AMP deaminases family. It depends on Zn(2+) as a cofactor.

It carries out the reaction adenosine + H2O + H(+) = inosine + NH4(+). It catalyses the reaction S-methyl-5'-thioadenosine + H2O + H(+) = S-methyl-5'-thioinosine + NH4(+). It functions in the pathway purine metabolism; purine nucleoside salvage. Inhibited by coformycin and methylthiocoformycin (MT-coformycin). Functionally, catalyzes the hydrolytic deamination of adenosine to produce inosine. Unlike mammalian adenosine deaminases, also catalyzes the deamination of 5'-methylthioadenosine (MTA), a by-product of polyamine biosynthesis, to produce 5'-methylthioinosine (MTI). Plays an essential role in the purine salvage pathway which allows the parasite to use host cell purines for the synthesis of nucleic acids. The polypeptide is Adenosine deaminase (Plasmodium vivax (strain Salvador I)).